The primary structure comprises 135 residues: Protein PilG (135 aa).

A Response regulatory domain is found at 9-125 (KVMVIDDSKT…ELLGAIKAHV (117 aa)). Aspartate 58 is modified (4-aspartylphosphate).

Phosphorylated.

Plays an essential role in both cAMP-dependent and independent regulation of twitching motility. Regulates the cAMP-independent coordination of type IV pilus (T4P) biogenesis and retraction that plays a role in surface and host cell adhesion, colonization, biofilm maturation, virulence, and twitching. In addition, phosphorylated PilG is necessary for cAMP production via regulation of the adenylate cyclase CyaB. Acts therefore as a response regulator of the chemosensory system/Chp system. The sequence is that of Protein PilG (pilG) from Pseudomonas aeruginosa (strain ATCC 15692 / DSM 22644 / CIP 104116 / JCM 14847 / LMG 12228 / 1C / PRS 101 / PAO1).